The sequence spans 359 residues: Histidinol-phosphate aminotransferase (359 aa).

N6-(pyridoxal phosphate)lysine is present on Lys217.

It belongs to the class-II pyridoxal-phosphate-dependent aminotransferase family. Histidinol-phosphate aminotransferase subfamily. In terms of assembly, homodimer. Pyridoxal 5'-phosphate is required as a cofactor.

The catalysed reaction is L-histidinol phosphate + 2-oxoglutarate = 3-(imidazol-4-yl)-2-oxopropyl phosphate + L-glutamate. It functions in the pathway amino-acid biosynthesis; L-histidine biosynthesis; L-histidine from 5-phospho-alpha-D-ribose 1-diphosphate: step 7/9. The polypeptide is Histidinol-phosphate aminotransferase (Salmonella enteritidis PT4 (strain P125109)).